The primary structure comprises 506 residues: Acetaldehyde dehydrogenase (506 aa).

Active-site residues include Glu262 and Cys301.

This sequence belongs to the aldehyde dehydrogenase family.

It catalyses the reaction acetaldehyde + NAD(+) + H2O = acetate + NADH + 2 H(+). It functions in the pathway alcohol metabolism; ethanol degradation; acetate from ethanol: step 2/2. Catalyzes the NAD(+)-dependent oxidation of acetaldehyde to acetate. Is likely a component of the ethanol oxidation system that allows P.aeruginosa to grow on ethanol as the sole carbon and energy source. The polypeptide is Acetaldehyde dehydrogenase (Pseudomonas aeruginosa).